We begin with the raw amino-acid sequence, 226 residues long: Insulin-like growth factor-binding protein 6 (226 aa).

The first 25 residues, 1–25 (MTWDGLPTQPLLMLLMLLFAAGSES), serve as a signal peptide directing secretion. Residues 26 to 99 (ALAGCPGCGP…LIGQGRCQRA (74 aa)) form the IGFBP N-terminal domain. Disulfide bonds link Cys-30/Cys-33, Cys-49/Cys-55, Cys-63/Cys-76, and Cys-70/Cys-96. The disordered stretch occupies residues 92 to 148 (GQGRCQRARGPSEETTKESKPHGGASRPRDRDRQKNPRTSAAPIRPSPVQDGEMGPC). Residues 101-126 (GPSEETTKESKPHGGASRPRDRDRQK) are compositionally biased toward basic and acidic residues. Positions 145–220 (MGPCRRHLDS…SPDGQGSSQC (76 aa)) constitute a Thyroglobulin type-1 domain. Disulfide bonds link Cys-148–Cys-176, Cys-187–Cys-198, and Cys-200–Cys-220. The interval 205 to 226 (GQPLPVSPDGQGSSQCSARSSG) is disordered. Polar residues predominate over residues 214–226 (GQGSSQCSARSSG).

Interacts (via C-terminal domain) with PHB2. In terms of processing, O-glycosylated.

The protein resides in the secreted. IGF-binding proteins prolong the half-life of the IGFs and have been shown to either inhibit or stimulate the growth promoting effects of the IGFs on cell culture. They alter the interaction of IGFs with their cell surface receptors. Activates the MAPK signaling pathway and induces cell migration. This chain is Insulin-like growth factor-binding protein 6 (Igfbp6), found in Rattus norvegicus (Rat).